The following is a 53-amino-acid chain: Conotoxin Cal6.27 (53 aa).

An N-terminal signal peptide occupies residues 1–24 (MKLTCVLIAAMLLLAVCQLDSADA). Disulfide bonds link C29-C43, C36-C47, and C42-C51.

Belongs to the conotoxin O1 superfamily. In terms of tissue distribution, expressed by the venom duct.

It localises to the secreted. In terms of biological role, probable neurotoxin. This chain is Conotoxin Cal6.27, found in Californiconus californicus (California cone).